The primary structure comprises 479 residues: Flotillin-like protein 3 (479 aa).

The S-palmitoyl cysteine moiety is linked to residue Cys-36. Coiled-coil stretches lie at residues 227 to 251 and 306 to 326; these read KVKT…AALA and EYET…KQAE.

This sequence belongs to the band 7/mec-2 family. Flotillin subfamily. In terms of processing, may be palmitoylated.

It is found in the cell membrane. The protein resides in the membrane. Its subcellular location is the caveola. May act as a scaffolding protein within caveolar membranes, functionally participating in formation of caveolae or caveolae-like vesicles. This is Flotillin-like protein 3 (FLOT3) from Arabidopsis thaliana (Mouse-ear cress).